A 238-amino-acid polypeptide reads, in one-letter code: tRNA (guanine-N(7)-)-methyltransferase (238 aa).

The S-adenosyl-L-methionine site is built by glutamate 68, glutamate 93, aspartate 120, and aspartate 143. Aspartate 143 is a catalytic residue. Residues lysine 147, aspartate 179, and 216–219 (TKFE) contribute to the substrate site.

This sequence belongs to the class I-like SAM-binding methyltransferase superfamily. TrmB family.

It catalyses the reaction guanosine(46) in tRNA + S-adenosyl-L-methionine = N(7)-methylguanosine(46) in tRNA + S-adenosyl-L-homocysteine. It participates in tRNA modification; N(7)-methylguanine-tRNA biosynthesis. Catalyzes the formation of N(7)-methylguanine at position 46 (m7G46) in tRNA. The sequence is that of tRNA (guanine-N(7)-)-methyltransferase from Shewanella baltica (strain OS155 / ATCC BAA-1091).